The following is a 348-amino-acid chain: Phenylalanine--tRNA ligase alpha subunit (348 aa).

A Mg(2+)-binding site is contributed by Glu268.

This sequence belongs to the class-II aminoacyl-tRNA synthetase family. Phe-tRNA synthetase alpha subunit type 1 subfamily. As to quaternary structure, tetramer of two alpha and two beta subunits. The cofactor is Mg(2+).

It localises to the cytoplasm. The catalysed reaction is tRNA(Phe) + L-phenylalanine + ATP = L-phenylalanyl-tRNA(Phe) + AMP + diphosphate + H(+). The protein is Phenylalanine--tRNA ligase alpha subunit of Bordetella bronchiseptica (strain ATCC BAA-588 / NCTC 13252 / RB50) (Alcaligenes bronchisepticus).